Here is a 753-residue protein sequence, read N- to C-terminus: Inactive protein-tyrosine phosphatase egg-5 (753 aa).

Disordered regions lie at residues 26–46 (TSLQ…STDN) and 77–116 (RKKV…YAAP). Positions 35 to 46 (NTDDSSADSTDN) are enriched in low complexity. The span at 84-94 (AQKDRRSKERL) shows a compositional bias: basic and acidic residues. The Tyrosine-protein phosphatase domain maps to 408–661 (MERRFEILEN…IFVHRLVAFF (254 aa)).

It belongs to the protein-tyrosine phosphatase family. In terms of assembly, part of a complex, consisting of pseudophosphatases egg-3, egg-4, egg-5 and kinase mbk-2; this complex is required for the oocyte-to-zygote transition. Interacts (via tyrosine-protein phosphatase domain) with kinase mbk-2 (via 'Tyr-619' and 'Tyr-621'); mbk-2 tyrosine phosphorylation enhances the interaction.

The protein resides in the cytoplasm. The protein localises to the cell cortex. Functionally, inactive phosphatase which acts redundantly with egg-4 in the oocyte-to-zygote transition. Required for polarized cortical actin cytoskeleton rearrangement in the oocyte before and after fertilization. Together with egg-4, required for the cortical localization of kinase mbk-2 in maturing oocyte until the end of meiosis I. Also required for kinase mbk-2, pseudophosphatase egg-3 and chitin synthase chs-1 localization to cytoplasmic foci after fertilization. In Caenorhabditis elegans, this protein is Inactive protein-tyrosine phosphatase egg-5.